The primary structure comprises 296 residues: ATP phosphoribosyltransferase (296 aa).

The protein belongs to the ATP phosphoribosyltransferase family. Long subfamily. It depends on Mg(2+) as a cofactor.

It localises to the cytoplasm. It catalyses the reaction 1-(5-phospho-beta-D-ribosyl)-ATP + diphosphate = 5-phospho-alpha-D-ribose 1-diphosphate + ATP. Its pathway is amino-acid biosynthesis; L-histidine biosynthesis; L-histidine from 5-phospho-alpha-D-ribose 1-diphosphate: step 1/9. With respect to regulation, feedback inhibited by histidine. Its function is as follows. Catalyzes the condensation of ATP and 5-phosphoribose 1-diphosphate to form N'-(5'-phosphoribosyl)-ATP (PR-ATP). Has a crucial role in the pathway because the rate of histidine biosynthesis seems to be controlled primarily by regulation of HisG enzymatic activity. This Halorubrum lacusprofundi (strain ATCC 49239 / DSM 5036 / JCM 8891 / ACAM 34) protein is ATP phosphoribosyltransferase.